The primary structure comprises 263 residues: Hydroxyacylglutathione hydrolase (263 aa).

Zn(2+)-binding residues include His-56, His-58, Asp-60, His-61, His-115, Asp-135, and His-175.

Belongs to the metallo-beta-lactamase superfamily. Glyoxalase II family. Monomer. Zn(2+) is required as a cofactor.

It catalyses the reaction an S-(2-hydroxyacyl)glutathione + H2O = a 2-hydroxy carboxylate + glutathione + H(+). The protein operates within secondary metabolite metabolism; methylglyoxal degradation; (R)-lactate from methylglyoxal: step 2/2. Thiolesterase that catalyzes the hydrolysis of S-D-lactoyl-glutathione to form glutathione and D-lactic acid. The chain is Hydroxyacylglutathione hydrolase from Nitrosococcus oceani (strain ATCC 19707 / BCRC 17464 / JCM 30415 / NCIMB 11848 / C-107).